The sequence spans 345 residues: Cytoskeleton protein RodZ (345 aa).

The Cytoplasmic portion of the chain corresponds to 1 to 111 (MNTEASQDQT…LGKKHKKRDG (111 aa)). In terms of domain architecture, HTH cro/C1-type spans 19–79 (LRQARESLGL…KLVHLPEDEL (61 aa)). The H-T-H motif DNA-binding region spans 30–49 (QQTVAERLCLKVSTIRDIEE). The chain crosses the membrane as a helical; Signal-anchor for type II membrane protein span at residues 112-132 (WLMSFTWLIVLVVLGLTGAWW). Residues 133 to 345 (WQNHQAQQAE…RVARLTVCVE (213 aa)) lie on the Periplasmic side of the membrane. Residues 151 to 259 (SAQLSQNGGQ…PLPTADAGVS (109 aa)) form a disordered region. Polar residues predominate over residues 188-225 (PLTNHSGSAITNSATTSSVPKTTSTEPVDTANTNTTMH). The span at 229–241 (AASAAVSPSQVPQ) shows a compositional bias: low complexity.

It belongs to the RodZ family.

The protein localises to the cell inner membrane. Its function is as follows. Cytoskeletal protein that is involved in cell-shape control through regulation of the length of the long axis. In Yersinia pestis bv. Antiqua (strain Antiqua), this protein is Cytoskeleton protein RodZ.